Here is a 267-residue protein sequence, read N- to C-terminus: Tryptophan synthase alpha chain (267 aa).

Catalysis depends on proton acceptor residues E43 and D54.

The protein belongs to the TrpA family. Tetramer of two alpha and two beta chains.

The catalysed reaction is (1S,2R)-1-C-(indol-3-yl)glycerol 3-phosphate + L-serine = D-glyceraldehyde 3-phosphate + L-tryptophan + H2O. Its pathway is amino-acid biosynthesis; L-tryptophan biosynthesis; L-tryptophan from chorismate: step 5/5. Functionally, the alpha subunit is responsible for the aldol cleavage of indoleglycerol phosphate to indole and glyceraldehyde 3-phosphate. This is Tryptophan synthase alpha chain from Bacillus licheniformis (strain ATCC 14580 / DSM 13 / JCM 2505 / CCUG 7422 / NBRC 12200 / NCIMB 9375 / NCTC 10341 / NRRL NRS-1264 / Gibson 46).